Consider the following 163-residue polypeptide: ATP synthase subunit b 1 (163 aa).

Residues 5–25 form a helical membrane-spanning segment; it reads FDATFFAFVGLVLFLALVVYL.

It belongs to the ATPase B chain family. As to quaternary structure, F-type ATPases have 2 components, F(1) - the catalytic core - and F(0) - the membrane proton channel. F(1) has five subunits: alpha(3), beta(3), gamma(1), delta(1), epsilon(1). F(0) has three main subunits: a(1), b(2) and c(10-14). The alpha and beta chains form an alternating ring which encloses part of the gamma chain. F(1) is attached to F(0) by a central stalk formed by the gamma and epsilon chains, while a peripheral stalk is formed by the delta and b chains.

The protein localises to the cell inner membrane. F(1)F(0) ATP synthase produces ATP from ADP in the presence of a proton or sodium gradient. F-type ATPases consist of two structural domains, F(1) containing the extramembraneous catalytic core and F(0) containing the membrane proton channel, linked together by a central stalk and a peripheral stalk. During catalysis, ATP synthesis in the catalytic domain of F(1) is coupled via a rotary mechanism of the central stalk subunits to proton translocation. Its function is as follows. Component of the F(0) channel, it forms part of the peripheral stalk, linking F(1) to F(0). The polypeptide is ATP synthase subunit b 1 (Rhizobium leguminosarum bv. trifolii (strain WSM2304)).